The following is a 311-amino-acid chain: Bifunctional protein FolD (311 aa).

174–176 (GKG) provides a ligand contact to NADP(+).

It belongs to the tetrahydrofolate dehydrogenase/cyclohydrolase family. In terms of assembly, homodimer.

The catalysed reaction is (6R)-5,10-methylene-5,6,7,8-tetrahydrofolate + NADP(+) = (6R)-5,10-methenyltetrahydrofolate + NADPH. It catalyses the reaction (6R)-5,10-methenyltetrahydrofolate + H2O = (6R)-10-formyltetrahydrofolate + H(+). The protein operates within one-carbon metabolism; tetrahydrofolate interconversion. Functionally, catalyzes the oxidation of 5,10-methylenetetrahydrofolate to 5,10-methenyltetrahydrofolate and then the hydrolysis of 5,10-methenyltetrahydrofolate to 10-formyltetrahydrofolate. In Pyrobaculum arsenaticum (strain DSM 13514 / JCM 11321 / PZ6), this protein is Bifunctional protein FolD.